The chain runs to 475 residues: 3-isopropylmalate dehydratase large subunit (475 aa).

[4Fe-4S] cluster contacts are provided by C352, C413, and C416.

This sequence belongs to the aconitase/IPM isomerase family. LeuC type 1 subfamily. Heterodimer of LeuC and LeuD. Requires [4Fe-4S] cluster as cofactor.

It catalyses the reaction (2R,3S)-3-isopropylmalate = (2S)-2-isopropylmalate. The protein operates within amino-acid biosynthesis; L-leucine biosynthesis; L-leucine from 3-methyl-2-oxobutanoate: step 2/4. Functionally, catalyzes the isomerization between 2-isopropylmalate and 3-isopropylmalate, via the formation of 2-isopropylmaleate. The sequence is that of 3-isopropylmalate dehydratase large subunit from Pseudomonas syringae pv. tomato (strain ATCC BAA-871 / DC3000).